Consider the following 417-residue polypeptide: Tyrosine--tRNA ligase (417 aa).

Tyr35 contributes to the L-tyrosine binding site. Positions 40 to 49 (ATAGSLTVGH) match the 'HIGH' region motif. L-tyrosine-binding residues include Tyr165 and Gln169. The 'KMSKS' region motif lies at 229–233 (KFGKS). Lys232 lines the ATP pocket. Residues 350–416 (ISLLEALVFT…GKRFNALIIF (67 aa)) form the S4 RNA-binding domain.

This sequence belongs to the class-I aminoacyl-tRNA synthetase family. TyrS type 1 subfamily. Homodimer.

Its subcellular location is the cytoplasm. It carries out the reaction tRNA(Tyr) + L-tyrosine + ATP = L-tyrosyl-tRNA(Tyr) + AMP + diphosphate + H(+). Functionally, catalyzes the attachment of tyrosine to tRNA(Tyr) in a two-step reaction: tyrosine is first activated by ATP to form Tyr-AMP and then transferred to the acceptor end of tRNA(Tyr). The protein is Tyrosine--tRNA ligase of Phytoplasma mali (strain AT).